We begin with the raw amino-acid sequence, 1105 residues long: Ran-binding protein 6 (1105 aa).

Alanine 2 is subject to N-acetylalanine. HEAT repeat units lie at residues 219–257, 361–399, 402–440, and 444–483; these read FKDF…TVPK, KVVL…GCHQ, ESIL…DFAP, and KKFH…DCPK. The tract at residues 333-383 is ran-GTP binding; sequence DEMEEDDFDSNAVAAESALDRLACGLGGKVVLPMTKEHIMQMLQSPDWKYR. Residues 806–842 are a coiled coil; the sequence is KAKLEGHFKNQELRQVKRQEENYDQQVEMSLQDEDEC. 3 HEAT repeats span residues 866–905, 908–946, and 949–987; these read LPWF…HCSP, FKYV…FGGD, and RSLC…IGKI.

This sequence belongs to the importin beta family.

It is found in the cytoplasm. The protein localises to the nucleus. May function in nuclear protein import as nuclear transport receptor. The chain is Ran-binding protein 6 (RANBP6) from Homo sapiens (Human).